The primary structure comprises 566 residues: Transmembrane protein 151B (566 aa).

Over residues Met-1–Ser-11 the composition is skewed to low complexity. A disordered region spans residues Met-1 to Ser-25. The segment covering Ala-12–Gly-23 has biased composition (gly residues). A run of 2 helical transmembrane segments spans residues Cys-65–Thr-85 and Tyr-112–Trp-132. A compositionally biased stretch (polar residues) spans Val-495 to Ser-512. A disordered region spans residues Val-495–Pro-529. A compositionally biased stretch (acidic residues) spans Gly-514–Ala-524.

The protein belongs to the TMEM151 family.

It is found in the membrane. The chain is Transmembrane protein 151B (TMEM151B) from Homo sapiens (Human).